The sequence spans 376 residues: UPF0754 membrane protein BLi01057/BL02871 (376 aa).

The next 2 membrane-spanning stretches (helical) occupy residues 1-21 (MYVF…GAVT) and 356-376 (YLGG…VILI).

It belongs to the UPF0754 family.

It is found in the cell membrane. The polypeptide is UPF0754 membrane protein BLi01057/BL02871 (Bacillus licheniformis (strain ATCC 14580 / DSM 13 / JCM 2505 / CCUG 7422 / NBRC 12200 / NCIMB 9375 / NCTC 10341 / NRRL NRS-1264 / Gibson 46)).